Consider the following 308-residue polypeptide: ATP synthase gamma chain (308 aa).

The protein belongs to the ATPase gamma chain family. As to quaternary structure, F-type ATPases have 2 components, CF(1) - the catalytic core - and CF(0) - the membrane proton channel. CF(1) has five subunits: alpha(3), beta(3), gamma(1), delta(1), epsilon(1). CF(0) has three main subunits: a, b and c.

It is found in the cell membrane. Produces ATP from ADP in the presence of a proton gradient across the membrane. The gamma chain is believed to be important in regulating ATPase activity and the flow of protons through the CF(0) complex. The protein is ATP synthase gamma chain of Lacticaseibacillus paracasei (strain ATCC 334 / BCRC 17002 / CCUG 31169 / CIP 107868 / KCTC 3260 / NRRL B-441) (Lactobacillus paracasei).